The sequence spans 89 residues: Protein S100-A6 (89 aa).

EF-hand domains lie at 12 to 47 and 48 to 83; these read LVAIFHKYSGKEGDKHTLSKKELKELIQKELTIGSK and LQDAEIARLMDDLDRNKDQEVNFQEYVAFLGALALI. Ca(2+) is bound by residues T28 and E33. K40 carries the post-translational modification N6-acetyllysine. The residue at position 46 (S46) is a Phosphoserine. K47 bears the N6-acetyllysine; alternate mark. An N6-succinyllysine; alternate modification is found at K47. Positions 61, 63, 65, 67, and 72 each coordinate Ca(2+).

The protein belongs to the S-100 family. As to quaternary structure, homodimer; head to tail assembly of 2 subunits. Interacts with CACYBP in a calcium-dependent manner. Interacts with ANXA2 and ANXA11 (via N-terminus). Interacts with SUGT1. Interacts with TP53; has higher affinity for TP53 that is phosphorylated on its N-terminal domain, and lower affinity for TP53 that is phosphorylated on its C-terminal domain. Interacts with tropomyosin. Interacts with FKBP4. Interacts with PPP5C (via TPR repeats); the interaction is calcium-dependent and modulates PPP5C activity. Interacts with TPPP; this interaction inhibits TPPP dimerization.

The protein localises to the nucleus envelope. The protein resides in the cytoplasm. It localises to the cell membrane. May function as calcium sensor and modulator, contributing to cellular calcium signaling. May function by interacting with other proteins, such as TPR-containing proteins, and indirectly play a role in many physiological processes such as the reorganization of the actin cytoskeleton and in cell motility. Binds 2 calcium ions. Calcium binding is cooperative. The sequence is that of Protein S100-A6 (S100a6) from Mus musculus (Mouse).